The sequence spans 137 residues: Cellular retinoic acid-binding protein 1 (137 aa).

Residues 21–31 (KALGVNTMLRK) carry the Nuclear localization signal motif. 132–134 (RIY) provides a ligand contact to all-trans-retinoate.

It belongs to the calycin superfamily. Fatty-acid binding protein (FABP) family.

It localises to the cytoplasm. Its function is as follows. Cytosolic CRABPs may regulate the access of retinoic acid to the nuclear retinoic acid receptors. The sequence is that of Cellular retinoic acid-binding protein 1 (crabp1) from Takifugu rubripes (Japanese pufferfish).